Here is a 117-residue protein sequence, read N- to C-terminus: S-adenosylmethionine decarboxylase proenzyme (117 aa).

The active-site Schiff-base intermediate with substrate; via pyruvic acid is Ser63. At Ser63 the chain carries Pyruvic acid (Ser); by autocatalysis. His68 (proton acceptor; for processing activity) is an active-site residue. Cys83 serves as the catalytic Proton donor; for catalytic activity.

The protein belongs to the prokaryotic AdoMetDC family. Type 1 subfamily. In terms of assembly, heterotetramer of two alpha and two beta chains arranged as a dimer of alpha/beta heterodimers. Pyruvate is required as a cofactor. Is synthesized initially as an inactive proenzyme. Formation of the active enzyme involves a self-maturation process in which the active site pyruvoyl group is generated from an internal serine residue via an autocatalytic post-translational modification. Two non-identical subunits are generated from the proenzyme in this reaction, and the pyruvate is formed at the N-terminus of the alpha chain, which is derived from the carboxyl end of the proenzyme. The post-translation cleavage follows an unusual pathway, termed non-hydrolytic serinolysis, in which the side chain hydroxyl group of the serine supplies its oxygen atom to form the C-terminus of the beta chain, while the remainder of the serine residue undergoes an oxidative deamination to produce ammonia and the pyruvoyl group blocking the N-terminus of the alpha chain.

It catalyses the reaction S-adenosyl-L-methionine + H(+) = S-adenosyl 3-(methylsulfanyl)propylamine + CO2. The protein operates within amine and polyamine biosynthesis; S-adenosylmethioninamine biosynthesis; S-adenosylmethioninamine from S-adenosyl-L-methionine: step 1/1. Its function is as follows. Catalyzes the decarboxylation of S-adenosylmethionine to S-adenosylmethioninamine (dcAdoMet), the propylamine donor required for the synthesis of the polyamines spermine and spermidine from the diamine putrescine. In Methanococcus aeolicus (strain ATCC BAA-1280 / DSM 17508 / OCM 812 / Nankai-3), this protein is S-adenosylmethionine decarboxylase proenzyme.